A 362-amino-acid polypeptide reads, in one-letter code: UDP-N-acetylglucosamine--N-acetylmuramyl-(pentapeptide) pyrophosphoryl-undecaprenol N-acetylglucosamine transferase (362 aa).

UDP-N-acetyl-alpha-D-glucosamine contacts are provided by residues 10 to 12 (TGG), Asn-124, Ser-194, Ile-249, and Gln-294.

It belongs to the glycosyltransferase 28 family. MurG subfamily.

The protein resides in the cell membrane. The enzyme catalyses Mur2Ac(oyl-L-Ala-gamma-D-Glu-L-Lys-D-Ala-D-Ala)-di-trans,octa-cis-undecaprenyl diphosphate + UDP-N-acetyl-alpha-D-glucosamine = beta-D-GlcNAc-(1-&gt;4)-Mur2Ac(oyl-L-Ala-gamma-D-Glu-L-Lys-D-Ala-D-Ala)-di-trans,octa-cis-undecaprenyl diphosphate + UDP + H(+). Its pathway is cell wall biogenesis; peptidoglycan biosynthesis. Functionally, cell wall formation. Catalyzes the transfer of a GlcNAc subunit on undecaprenyl-pyrophosphoryl-MurNAc-pentapeptide (lipid intermediate I) to form undecaprenyl-pyrophosphoryl-MurNAc-(pentapeptide)GlcNAc (lipid intermediate II). In Pediococcus pentosaceus (strain ATCC 25745 / CCUG 21536 / LMG 10740 / 183-1w), this protein is UDP-N-acetylglucosamine--N-acetylmuramyl-(pentapeptide) pyrophosphoryl-undecaprenol N-acetylglucosamine transferase.